The following is a 478-amino-acid chain: NADH-quinone oxidoreductase subunit N (478 aa).

Transmembrane regions (helical) follow at residues 5–25 (LASPEIVLALCGLVILLVGVA), 37–57 (MLTLGAFLVTGLLTVSGALGL), 68–88 (FAVMVKLLILSGASIAVVLSL), 99–119 (FEFPVLTLFSTVGMMVMVSAS), 121–141 (FMTLYMGLELMSLAIYVLAAF), 156–176 (FVLGSLASGLLLYGISLIYGF), 199–219 (LTVGVVFVIAGLAFKISAAPF), 231–251 (PTPVTAFMGTAPKVAAIAMML), 268–288 (VVALISVVSMVWGALAAIGQT), 293–313 (LMAYSSIGHMGYALVGLAAGS), 320–340 (LLIYLVTYVFMNTGTFACILA), 365–385 (ALLLAIFMFSMAGIPPMSGFF), 401–421 (LLWGLAVIGVLTSVIGAYYYL), and 446–466 (VVAVGSAIFTALFFLFPAPIL).

The protein belongs to the complex I subunit 2 family. As to quaternary structure, NDH-1 is composed of 14 different subunits. Subunits NuoA, H, J, K, L, M, N constitute the membrane sector of the complex.

Its subcellular location is the cell inner membrane. It catalyses the reaction a quinone + NADH + 5 H(+)(in) = a quinol + NAD(+) + 4 H(+)(out). Its function is as follows. NDH-1 shuttles electrons from NADH, via FMN and iron-sulfur (Fe-S) centers, to quinones in the respiratory chain. The immediate electron acceptor for the enzyme in this species is believed to be ubiquinone. Couples the redox reaction to proton translocation (for every two electrons transferred, four hydrogen ions are translocated across the cytoplasmic membrane), and thus conserves the redox energy in a proton gradient. The chain is NADH-quinone oxidoreductase subunit N from Granulibacter bethesdensis (strain ATCC BAA-1260 / CGDNIH1).